Here is a 1186-residue protein sequence, read N- to C-terminus: Partner and localizer of BRCA2 (1186 aa).

The required for its oligomerization and is important for its focal concentration at DNA damage sites stretch occupies residues 1-160; it reads MDEPPGKPLS…QKRTFISQER (160 aa). Residues 1–200 are interaction with RAD51; the sequence is MDEPPGKPLS…PVTEIRTHLL (200 aa). Residues 1–319 form an interaction with BRCA1 region; that stretch reads MDEPPGKPLS…SKSGQLPTSS (319 aa). Residues 1–579 form a DNA-binding (with the preference D loop &gt; dsDNA &gt; ssDNA) region; that stretch reads MDEPPGKPLS…EDSLSWSNSA (579 aa). The stretch at 9 to 41 forms a coiled coil; the sequence is LSCEEKEKLKEKLAFLKREYSKTLARLQRAQRA. Disordered regions lie at residues 52–72 and 95–157; these read VEEQDCLSQQDLSPQLKHSEP and KTSI…TFIS. Residues 120–141 are compositionally biased toward basic and acidic residues; that stretch reads RTDDTQEHFPHRVSDPSGEQKQ. Residues 143-152 show a composition bias toward basic residues; that stretch reads LPSRRKKQQK. Phosphoserine occurs at positions 172 and 190. The disordered stretch occupies residues 252-273; sequence TLSDSGSSQHLEHIPPKGSSEL. Position 285 is a phosphoserine (serine 285). Residues 346–365 are disordered; it reads KEQNQTEKSLKSPSDTLDGR. A phosphoserine mark is found at serine 376 and serine 387. The tract at residues 395–446 is chAM (Chromatin-association motif); required for chromatin association, mediates nucleosome association; sequence SCTVPEGLLFPAEYYVRTTRSMSNCQRKVAVEAVIQSHLDVKKKGFKNKNKD. Positions 440-525 are disordered; that stretch reads FKNKNKDASK…RKSACTPASD (86 aa). At serine 454 the chain carries Phosphoserine. A compositionally biased stretch (polar residues) spans 467–488; that stretch reads GTCTGQPSSRTSQKLLSLTKVS. Position 660 is a phosphoserine (serine 660). Disordered regions lie at residues 679 to 698 and 774 to 798; these read PGKSHPKRPNSQSQHTKTGL and KQFDSSGSPAKPHTTLQVSGRQGQP. Residues 687-698 show a composition bias toward polar residues; the sequence is PNSQSQHTKTGL. The segment at 775-1186 is required for interaction with POLH and POLH DNA synthesis stimulation; the sequence is QFDSSGSPAK…DGNIFVYHYS (412 aa). At serine 781 the chain carries Phosphoserine. Residues 853–1186 form an interaction with RAD51, BRCA2 and POLH region; the sequence is GNLQLVSELK…DGNIFVYHYS (334 aa). 7 WD repeats span residues 854–915, 917–961, 962–1009, 1010–1052, 1058–1109, 1115–1153, and 1155–1186; these read NLQL…WHFA, VPVL…QVLL, KSGN…LMPP, EETI…MHID, SVCH…MLYC, AGRFLEGDVKDHCAAAILTSGTIAIWDLLLGQCTALLPP, and SDQHWSFVKWSGTDSHLLAGQKDGNIFVYHYS.

As to quaternary structure, homooligomer; dissociated upon DNA damage thus allowing association with BRCA1. Oligomerization is essential for its focal accumulation at DNA breaks. Part of a BRCA complex containing BRCA1, BRCA2 and PALB2. Interacts with BRCA1 and this interaction is essential for its function in HRR. Interacts with RAD51AP1 and MORF4L1/MRG15. Component of the homologous recombination repair (HR) complex composed of ERCC5/XPG, BRCA2, PALB2, DSS1 and RAD51. Within the complex, interacts with ERCC5/XPG and BRCA2. Interacts with BRCA2, RAD51C, RAD51 and XRCC3; the interactions are direct and it may serve as a scaffold for a HR complex containing PALB2, BRCA2, RAD51C, RAD51 and XRCC3. Interacts with POLH; the interaction is direct.

It is found in the nucleus. Functionally, plays a critical role in homologous recombination repair (HRR) through its ability to recruit BRCA2 and RAD51 to DNA breaks. Strongly stimulates the DNA strand-invasion activity of RAD51, stabilizes the nucleoprotein filament against a disruptive BRC3-BRC4 polypeptide and helps RAD51 to overcome the suppressive effect of replication protein A (RPA). Functionally cooperates with RAD51AP1 in promoting of D-loop formation by RAD51. Serves as the molecular scaffold in the formation of the BRCA1-PALB2-BRCA2 complex which is essential for homologous recombination. Via its WD repeats is proposed to scaffold a HR complex containing RAD51C and BRCA2 which is thought to play a role in HR-mediated DNA repair. Essential partner of BRCA2 that promotes the localization and stability of BRCA2. Also enables its recombinational repair and checkpoint functions of BRCA2. May act by promoting stable association of BRCA2 with nuclear structures, allowing BRCA2 to escape the effects of proteasome-mediated degradation. Binds DNA with high affinity for D loop, which comprises single-stranded, double-stranded and branched DNA structures. May play a role in the extension step after strand invasion at replication-dependent DNA double-strand breaks; together with BRCA2 is involved in both POLH localization at collapsed replication forks and DNA polymerization activity. This is Partner and localizer of BRCA2 (PALB2) from Homo sapiens (Human).